We begin with the raw amino-acid sequence, 227 residues long: Thymidylate kinase (227 aa).

An ATP-binding site is contributed by 16–23 (GIDGAGKT).

The protein belongs to the thymidylate kinase family.

It catalyses the reaction dTMP + ATP = dTDP + ADP. Its function is as follows. Phosphorylation of dTMP to form dTDP in both de novo and salvage pathways of dTTP synthesis. The polypeptide is Thymidylate kinase (Xanthomonas oryzae pv. oryzae (strain MAFF 311018)).